The sequence spans 160 residues: Ribonuclease H (160 aa).

The region spanning 1-157 is the RNase H type-1 domain; the sequence is MNIEIYTDGA…CDRLAVEACQ (157 aa). Positions 8, 49, 85, and 149 each coordinate Mg(2+).

This sequence belongs to the RNase H family. Monomer. It depends on Mg(2+) as a cofactor.

The protein resides in the cytoplasm. The enzyme catalyses Endonucleolytic cleavage to 5'-phosphomonoester.. Endonuclease that specifically degrades the RNA of RNA-DNA hybrids. This chain is Ribonuclease H, found in Treponema denticola (strain ATCC 35405 / DSM 14222 / CIP 103919 / JCM 8153 / KCTC 15104).